The primary structure comprises 98 residues: Protein translation factor SUI1 homolog (98 aa).

This sequence belongs to the SUI1 family.

This is Protein translation factor SUI1 homolog from Pyrococcus furiosus (strain ATCC 43587 / DSM 3638 / JCM 8422 / Vc1).